The following is a 507-amino-acid chain: Probable cytosol aminopeptidase (507 aa).

The Mn(2+) site is built by Lys275 and Asp280. The active site involves Lys287. 3 residues coordinate Mn(2+): Asp298, Asp357, and Glu359. Arg361 is a catalytic residue.

It belongs to the peptidase M17 family. Mn(2+) serves as cofactor.

The protein resides in the cytoplasm. The enzyme catalyses Release of an N-terminal amino acid, Xaa-|-Yaa-, in which Xaa is preferably Leu, but may be other amino acids including Pro although not Arg or Lys, and Yaa may be Pro. Amino acid amides and methyl esters are also readily hydrolyzed, but rates on arylamides are exceedingly low.. It catalyses the reaction Release of an N-terminal amino acid, preferentially leucine, but not glutamic or aspartic acids.. In terms of biological role, presumably involved in the processing and regular turnover of intracellular proteins. Catalyzes the removal of unsubstituted N-terminal amino acids from various peptides. This is Probable cytosol aminopeptidase from Acidobacterium capsulatum (strain ATCC 51196 / DSM 11244 / BCRC 80197 / JCM 7670 / NBRC 15755 / NCIMB 13165 / 161).